We begin with the raw amino-acid sequence, 837 residues long: Neural cell adhesion molecule 2 (837 aa).

The signal sequence occupies residues 1 to 19 (MSLLLSFYLLGLLVSSGQA). Topologically, residues 20-697 (LLQVTISLSK…PNIIKDTLFN (678 aa)) are extracellular. Ig-like C2-type domains follow at residues 21 to 108 (LQVT…ATVV), 113 to 202 (QKLT…RDII), 208 to 297 (PPAI…AFLQ), 302 to 396 (PHII…MYLD), and 401 to 491 (PKFI…YILA). 2 cysteine pairs are disulfide-bonded: C42–C93 and C136–C186. N177 and N219 each carry an N-linked (GlcNAc...) asparagine glycan. An intrachain disulfide couples C232 to C281. N-linked (GlcNAc...) asparagine glycosylation occurs at N309. The cysteines at positions 322 and 380 are disulfide-linked. N-linked (GlcNAc...) asparagine glycans are attached at residues N406, N419, N445, N474, and N562. C422 and C475 are oxidised to a cystine. 2 consecutive Fibronectin type-III domains span residues 498–591 (SPYG…TLPV) and 593–688 (EPSP…PPKP). Residues 698-718 (GLGLGAVIGLGVAALLLILVV) form a helical membrane-spanning segment. The Cytoplasmic portion of the chain corresponds to 719–837 (TDVSCFFIRQ…IQSKEDDSKA (119 aa)). Over residues 764 to 785 (GSKEPIVEMRTEDERVTNHEDG) the composition is skewed to basic and acidic residues. The tract at residues 764-818 (GSKEPIVEMRTEDERVTNHEDGSPVNEPNETTPLTEPEKLPLKEEDGKEALNPET) is disordered. A Phosphoserine modification is found at S765. Position 780 is a phosphothreonine (T780). Position 786 is a phosphoserine (S786). Low complexity predominate over residues 789 to 798 (NEPNETTPLT). The segment covering 799 to 814 (EPEKLPLKEEDGKEAL) has biased composition (basic and acidic residues).

Expressed most strongly in adult and fetal brain.

The protein localises to the cell membrane. Its function is as follows. May play important roles in selective fasciculation and zone-to-zone projection of the primary olfactory axons. The protein is Neural cell adhesion molecule 2 (NCAM2) of Homo sapiens (Human).